Reading from the N-terminus, the 557-residue chain is Polypyrimidine tract-binding protein 1 (557 aa).

Met-1 is modified (N-acetylmethionine). Position 16 is a phosphoserine (Ser-16). RRM domains are found at residues 59-143 (RVIH…SSPN), 184-260 (LRII…FSKL), and 363-437 (SVLL…LSKH). Lys-65 participates in a covalent cross-link: Glycyl lysine isopeptide (Lys-Gly) (interchain with G-Cter in SUMO2). The residue at position 127 (Tyr-127) is a Phosphotyrosine. Thr-138 is modified (phosphothreonine). Ser-141 is subject to Phosphoserine. Lys-218 participates in a covalent cross-link: Glycyl lysine isopeptide (Lys-Gly) (interchain with G-Cter in SUMO2). Phosphoserine is present on Ser-459. The RRM 4 domain occupies 480-555 (ATLHLSNIPP…HHLRVSFSKS (76 aa)).

As to quaternary structure, monomer. Part of a ternary complex containing KHSRP, PTBP1, PTBP2 and HNRPH1. Interacts with RAVER1 and SFPQ.

It is found in the nucleus. In terms of biological role, plays a role in pre-mRNA splicing and in the regulation of alternative splicing events. Activates exon skipping of its own pre-mRNA during muscle cell differentiation. Binds to the polypyrimidine tract of introns. May promote RNA looping when bound to two separate polypyrimidine tracts in the same pre-mRNA. May promote the binding of U2 snRNP to pre-mRNA. Cooperates with RAVER1 to modulate switching between mutually exclusive exons during maturation of the TPM1 pre-mRNA. Represses the splicing of MAPT/Tau exon 10. Binds to polypyrimidine-rich controlling element (PCE) of CFTR and promotes exon skipping of CFTR exon 9, thereby antagonizing TIA1 and its role in exon inclusion of CFTR exon 9. Plays a role in the splicing of pyruvate kinase PKM by binding repressively to a polypyrimidine tract flanking PKM exon 9, inhibiting exon 9 inclusion and resulting in exon 10 inclusion and production of the PKM M2 isoform. In Sus scrofa (Pig), this protein is Polypyrimidine tract-binding protein 1 (PTBP1).